The primary structure comprises 211 residues: Scoloptoxin SSD43 (211 aa).

An N-terminal signal peptide occupies residues 1–20 (MNFVIYGVIVVLTSQLYVDG).

Post-translationally, contains 3 disulfide bonds. In terms of tissue distribution, expressed by the venom gland.

Its subcellular location is the secreted. Shows trypsin inhibiting activity. The protein is highly thermally stable, since its incubation in boiling water during 10 minutes does not reduce its activity. This is Scoloptoxin SSD43 from Scolopendra dehaani (Thai centipede).